The primary structure comprises 287 residues: MILLDGKALSEKIKAEVKLEVEEIVKEKEITPGLAVILVGNDPASATYVASKAKSCENAGIYSVVHKMPETITQEELLQTIAMMNKNPKLDGILVQLPLPKQIDTTVVLEAIDPLKDVDGFHPYNVGRMVSNLDAFLPATPFGVMRMFEEYGIELSGKNVVVIGSSDIVGKPMASLLINAKATVTVCNSRTKDLKAHTLAADIVVIAVGVPFLLKEDMVKDGAIVIDVGINRLDTGKLVGDADFEGLKNKCSFLTPVPGGVGPMTIAMLLKNTIKASKLREKRENRC.

NADP(+) is bound by residues 164–166 (GSS), S189, and I230.

Belongs to the tetrahydrofolate dehydrogenase/cyclohydrolase family. In terms of assembly, homodimer.

The enzyme catalyses (6R)-5,10-methylene-5,6,7,8-tetrahydrofolate + NADP(+) = (6R)-5,10-methenyltetrahydrofolate + NADPH. The catalysed reaction is (6R)-5,10-methenyltetrahydrofolate + H2O = (6R)-10-formyltetrahydrofolate + H(+). It participates in one-carbon metabolism; tetrahydrofolate interconversion. Catalyzes the oxidation of 5,10-methylenetetrahydrofolate to 5,10-methenyltetrahydrofolate and then the hydrolysis of 5,10-methenyltetrahydrofolate to 10-formyltetrahydrofolate. This Aliarcobacter butzleri (strain RM4018) (Arcobacter butzleri) protein is Bifunctional protein FolD.